The following is a 230-amino-acid chain: MLTSKDFRDQAINLIKKWNNIIDEIPWQWNQINELNNESKGYFTTKRYHKINNNNNNNNNNNIENKNNNNIENFEEIKETIDDSSTTIIKSNNNNNENNIIIFQFDIIYSKSYQVPVLYLNGFSSFDSSPLSWNEIWNNLPLSNLDKNQQSTIPYITQVEHPILGNPCYQLHPCETDNLMKLILLKEKDYNDNNDKKEYFKDYYLLSWLSIIGPMVNIKIPFDLLKNNNI.

C174 acts as the Glycyl thioester intermediate in catalysis.

The protein belongs to the ATG10 family.

It localises to the cytoplasm. In terms of biological role, E2-like enzyme involved in autophagy. Acts as an E2-like enzyme that catalyzes the conjugation of atg12 to atg5. atg12 conjugation to atg5 is required for autophagy. Likely serves as an atg5-recognition molecule. The sequence is that of Ubiquitin-like-conjugating enzyme ATG10 (atg10) from Dictyostelium discoideum (Social amoeba).